The chain runs to 269 residues: Photosystem I assembly factor PSA3, chloroplastic (269 aa).

Residues 1 to 37 (MGALPVAHSLALTAAFLPCRRPAAHGRCRRRRYRAVV) constitute a chloroplast transit peptide.

It localises to the plastid. The protein resides in the chloroplast thylakoid membrane. In terms of biological role, nuclear genome-encoded factor required for the accumulation of photosystem I (PSI). Functions as a PSI biogenesis factor. Cooperates with PYG7 to promote the stable assembly of PSI in the thylakoid membrane. May target primarily the PsaC subunit. Does not seem to be required for the expression of chloroplast genes encoding PSI subunits. The sequence is that of Photosystem I assembly factor PSA3, chloroplastic from Zea mays (Maize).